Here is a 146-residue protein sequence, read N- to C-terminus: NADH-quinone oxidoreductase subunit A (146 aa).

3 helical membrane passes run 4-24 (IYHWGLIAFIVGILFLCVFML), 63-83 (LIAMFFVIFDVEGIYVYAWAI), and 91-111 (IGFSEIFIFIFILLVSLIYLI).

It belongs to the complex I subunit 3 family. In terms of assembly, NDH-1 is composed of 13 different subunits. Subunits NuoA, H, J, K, L, M, N constitute the membrane sector of the complex.

It is found in the cell inner membrane. The enzyme catalyses a quinone + NADH + 5 H(+)(in) = a quinol + NAD(+) + 4 H(+)(out). NDH-1 shuttles electrons from NADH, via FMN and iron-sulfur (Fe-S) centers, to quinones in the respiratory chain. The immediate electron acceptor for the enzyme in this species is believed to be ubiquinone. Couples the redox reaction to proton translocation (for every two electrons transferred, four hydrogen ions are translocated across the cytoplasmic membrane), and thus conserves the redox energy in a proton gradient. This chain is NADH-quinone oxidoreductase subunit A, found in Blochmanniella pennsylvanica (strain BPEN).